The following is a 1290-amino-acid chain: Alpha-amylase (1290 aa).

Residues 1-31 (MTRKTRYLHQITTLILGGLLIVPAAAPPVSA) form the signal peptide. Glu-231 acts as the Nucleophile in catalysis. Catalysis depends on Asp-373, which acts as the Proton donor. The region spanning 817–902 (VPANLQATVM…AAATATTPAG (86 aa)) is the Fibronectin type-III domain. Residues 902–978 (GNHVTVYYKQ…SNGGSNYLFG (77 aa)) form a CBM25 region. 2 stretches are compositionally biased toward low complexity: residues 994-1008 (APVAPSATPTVAPTA) and 1016-1031 (VTPTVTPITTPTVAPT). Residues 994–1037 (APVAPSATPTVAPTATPTPKPSVTPTVTPITTPTVAPTLSPTPT) are disordered. Positions 1092 to 1171 (GNSATIYYKN…NGGSNYHFGT (80 aa)) are CBM25. Positions 1183-1289 (TGEPQADSVT…VTLTVQRWKD (107 aa)) constitute a CBM20 domain.

The protein belongs to the glycosyl hydrolase 119 (GH119) family.

Its subcellular location is the secreted. It carries out the reaction Endohydrolysis of (1-&gt;4)-alpha-D-glucosidic linkages in polysaccharides containing three or more (1-&gt;4)-alpha-linked D-glucose units.. In terms of biological role, acts on maltooligosaccharides that have a degree of polymerization (DP) of 4 or more, amylose, and soluble or raw starch to produce glucose and maltooligosaccharides up to DP5 by a hydrolysis reaction. Also acts on maltooligosyl trehaloses that have DP5 or more to produce trehalose as the major hydrolysis product. In Niallia circulans (Bacillus circulans), this protein is Alpha-amylase.